The primary structure comprises 404 residues: Probable tRNA sulfurtransferase (404 aa).

Residues 61–166 enclose the THUMP domain; it reads EAVSERLKDV…SGYSYIMCDE (106 aa). Residues 184–185, 209–210, arginine 266, glycine 288, and glutamine 297 contribute to the ATP site; these read LL and HF.

This sequence belongs to the ThiI family.

The protein resides in the cytoplasm. It carries out the reaction [ThiI sulfur-carrier protein]-S-sulfanyl-L-cysteine + a uridine in tRNA + 2 reduced [2Fe-2S]-[ferredoxin] + ATP + H(+) = [ThiI sulfur-carrier protein]-L-cysteine + a 4-thiouridine in tRNA + 2 oxidized [2Fe-2S]-[ferredoxin] + AMP + diphosphate. The catalysed reaction is [ThiS sulfur-carrier protein]-C-terminal Gly-Gly-AMP + S-sulfanyl-L-cysteinyl-[cysteine desulfurase] + AH2 = [ThiS sulfur-carrier protein]-C-terminal-Gly-aminoethanethioate + L-cysteinyl-[cysteine desulfurase] + A + AMP + 2 H(+). The protein operates within cofactor biosynthesis; thiamine diphosphate biosynthesis. Its function is as follows. Catalyzes the ATP-dependent transfer of a sulfur to tRNA to produce 4-thiouridine in position 8 of tRNAs, which functions as a near-UV photosensor. Also catalyzes the transfer of sulfur to the sulfur carrier protein ThiS, forming ThiS-thiocarboxylate. This is a step in the synthesis of thiazole, in the thiamine biosynthesis pathway. The sulfur is donated as persulfide by IscS. The polypeptide is Probable tRNA sulfurtransferase (Bacillus cereus (strain B4264)).